The primary structure comprises 502 residues: ATP synthase subunit alpha (502 aa).

The interval 119 to 139 is disordered; sequence GPIATTKSRPIESPAPGVMDR. ATP is bound at residue 169–176; sequence GDRQTGKT.

Belongs to the ATPase alpha/beta chains family. In terms of assembly, F-type ATPases have 2 components, CF(1) - the catalytic core - and CF(0) - the membrane proton channel. CF(1) has five subunits: alpha(3), beta(3), gamma(1), delta(1), epsilon(1). CF(0) has three main subunits: a(1), b(2) and c(9-12). The alpha and beta chains form an alternating ring which encloses part of the gamma chain. CF(1) is attached to CF(0) by a central stalk formed by the gamma and epsilon chains, while a peripheral stalk is formed by the delta and b chains.

It localises to the cell membrane. The catalysed reaction is ATP + H2O + 4 H(+)(in) = ADP + phosphate + 5 H(+)(out). Produces ATP from ADP in the presence of a proton gradient across the membrane. The alpha chain is a regulatory subunit. This Alkalihalophilus pseudofirmus (strain ATCC BAA-2126 / JCM 17055 / OF4) (Bacillus pseudofirmus) protein is ATP synthase subunit alpha.